The primary structure comprises 126 residues: Holo-[acyl-carrier-protein] synthase (126 aa).

Mg(2+) is bound by residues D9 and E58.

It belongs to the P-Pant transferase superfamily. AcpS family. Requires Mg(2+) as cofactor.

The protein resides in the cytoplasm. The catalysed reaction is apo-[ACP] + CoA = holo-[ACP] + adenosine 3',5'-bisphosphate + H(+). Its function is as follows. Transfers the 4'-phosphopantetheine moiety from coenzyme A to a Ser of acyl-carrier-protein. This is Holo-[acyl-carrier-protein] synthase from Serratia proteamaculans (strain 568).